Reading from the N-terminus, the 335-residue chain is Large ribosomal subunit protein uL10 (335 aa).

The tract at residues 306–335 is disordered; the sequence is VEETVEEEEEEEEEEDAEEEAAAGLGALFG. The segment covering 308–326 has biased composition (acidic residues); that stretch reads ETVEEEEEEEEEEDAEEEA.

The protein belongs to the universal ribosomal protein uL10 family. Part of the 50S ribosomal subunit. Forms part of the ribosomal stalk which helps the ribosome interact with GTP-bound translation factors. Forms a heptameric L10(L12)2(L12)2(L12)2 complex, where L10 forms an elongated spine to which the L12 dimers bind in a sequential fashion.

Forms part of the ribosomal stalk, playing a central role in the interaction of the ribosome with GTP-bound translation factors. The polypeptide is Large ribosomal subunit protein uL10 (Methanobrevibacter smithii (strain ATCC 35061 / DSM 861 / OCM 144 / PS)).